The sequence spans 347 residues: Probable tRNA N6-adenosine threonylcarbamoyltransferase (347 aa).

3 residues coordinate a divalent metal cation: His-109, His-113, and Tyr-130. Residues 130 to 134 (YVSGG), Asp-162, Gly-177, Glu-181, and Asn-277 each bind substrate. Position 305 (Asp-305) interacts with a divalent metal cation.

The protein belongs to the KAE1 / TsaD family. As to quaternary structure, component of the EKC/KEOPS complex; the whole complex dimerizes. The cofactor is a divalent metal cation.

It is found in the cytoplasm. It localises to the nucleus. It carries out the reaction L-threonylcarbamoyladenylate + adenosine(37) in tRNA = N(6)-L-threonylcarbamoyladenosine(37) in tRNA + AMP + H(+). Its function is as follows. Component of the EKC/KEOPS complex that is required for the formation of a threonylcarbamoyl group on adenosine at position 37 (t(6)A37) in tRNAs that read codons beginning with adenine. The complex is probably involved in the transfer of the threonylcarbamoyl moiety of threonylcarbamoyl-AMP (TC-AMP) to the N6 group of A37. Likely plays a direct catalytic role in this reaction, but requires other protein(s) of the complex to fulfill this activity. The sequence is that of Probable tRNA N6-adenosine threonylcarbamoyltransferase from Drosophila melanogaster (Fruit fly).